The sequence spans 805 residues: Kinesin-like protein Klp10A (805 aa).

Residues M1 to V274 are globular. Disordered stretches follow at residues Q68 to G94 and I117 to H211. Polar residues predominate over residues A80 to G94. Residues S123–T136 show a composition bias toward low complexity. S157 carries the post-translational modification Phosphoserine. Positions Q158–N179 are enriched in polar residues. A compositionally biased stretch (low complexity) spans P180–Q200. Residues A205 to D244 are a coiled coil. One can recognise a Kinesin motor domain in the interval Q278–L610. G368–T375 is an ATP binding site. At T630 the chain carries Phosphothreonine. The tract at residues E633–G688 is disordered. The segment covering L648 to A664 has biased composition (polar residues). The span at N676 to G688 shows a compositional bias: low complexity. 3 positions are modified to phosphoserine: S795, S797, and S800.

It belongs to the TRAFAC class myosin-kinesin ATPase superfamily. Kinesin family. MCAK/KIF2 subfamily. Interacts with Alms1a (via C-terminus). In terms of tissue distribution, expressed in male germline stem cells and spermatogonia (at protein level).

The protein resides in the cytoplasm. It is found in the cytoskeleton. The protein localises to the microtubule organizing center. It localises to the centrosome. Its subcellular location is the spindle pole. The protein resides in the chromosome. It is found in the centromere. In terms of biological role, required during anaphase to drive sister chromatid separation to promote flux by actively depolymerizing kinetochore microtubules at their pole-associated minus ends, thereby moving chromatids through a 'poleward flux'. Involved in asymmetric cell division of sensory organ precursor (SOP) cells by playing a role in the asymmetric localization of Sara-expressing endosomes to the pIIa daughter cell but not to the pIIb cell. Klp98A targets Sara-expressing endosomes to the central spindle which is symmetrically arranged in early cell division. During late cytokinesis, central spindle asymmetry is generated by enrichment of Patronin on the pIIb side which protects microtubules from depolymerization by Klp10A while unprotected microtubules on the pIIa side are disassembled by Klp10A, leading to the asymmetric delivery of Sara-expressing endosomes to the pIIa daughter cell. This Drosophila melanogaster (Fruit fly) protein is Kinesin-like protein Klp10A.